A 276-amino-acid chain; its full sequence is UPF0761 membrane protein APL_1950 (276 aa).

7 helical membrane passes run 33–53 (TLAI…FPIF), 90–110 (MGIV…QSID), 125–145 (IFIS…LAGG), 147–167 (IAIS…LLSF), 171–191 (LLQY…YWLV), 203–223 (LGAI…VWYI), and 239–259 (LPIM…GGLI).

The protein belongs to the UPF0761 family.

The protein resides in the cell inner membrane. The chain is UPF0761 membrane protein APL_1950 from Actinobacillus pleuropneumoniae serotype 5b (strain L20).